Consider the following 273-residue polypeptide: Ribosomal RNA small subunit methyltransferase A (273 aa).

The S-adenosyl-L-methionine site is built by Asn18, Leu20, Gly45, Glu66, Asp91, and Asn113.

The protein belongs to the class I-like SAM-binding methyltransferase superfamily. rRNA adenine N(6)-methyltransferase family. RsmA subfamily.

It localises to the cytoplasm. The catalysed reaction is adenosine(1518)/adenosine(1519) in 16S rRNA + 4 S-adenosyl-L-methionine = N(6)-dimethyladenosine(1518)/N(6)-dimethyladenosine(1519) in 16S rRNA + 4 S-adenosyl-L-homocysteine + 4 H(+). Its function is as follows. Specifically dimethylates two adjacent adenosines (A1518 and A1519) in the loop of a conserved hairpin near the 3'-end of 16S rRNA in the 30S particle. May play a critical role in biogenesis of 30S subunits. The polypeptide is Ribosomal RNA small subunit methyltransferase A (Escherichia coli (strain 55989 / EAEC)).